The chain runs to 393 residues: Lipid-A-disaccharide synthase (393 aa).

This sequence belongs to the LpxB family.

The enzyme catalyses a lipid X + a UDP-2-N,3-O-bis[(3R)-3-hydroxyacyl]-alpha-D-glucosamine = a lipid A disaccharide + UDP + H(+). The protein operates within bacterial outer membrane biogenesis; LPS lipid A biosynthesis. Functionally, condensation of UDP-2,3-diacylglucosamine and 2,3-diacylglucosamine-1-phosphate to form lipid A disaccharide, a precursor of lipid A, a phosphorylated glycolipid that anchors the lipopolysaccharide to the outer membrane of the cell. The sequence is that of Lipid-A-disaccharide synthase from Actinobacillus pleuropneumoniae serotype 3 (strain JL03).